The primary structure comprises 394 residues: Elongation factor Tu (394 aa).

Positions 10-204 constitute a tr-type G domain; that stretch reads KPHINIGTIG…AVDDNIPTPE (195 aa). Residues 19 to 26 form a G1 region; that stretch reads GHVDHGKT. 19–26 contacts GTP; sequence GHVDHGKT. A Mg(2+)-binding site is contributed by Thr-26. Residues 60 to 64 are G2; the sequence is GITIN. Residues 81-84 are G3; that stretch reads DCPG. Residues 81–85 and 136–139 contribute to the GTP site; these read DCPGH and NKID. The tract at residues 136-139 is G4; sequence NKID. A G5 region spans residues 174-176; that stretch reads SAL.

Belongs to the TRAFAC class translation factor GTPase superfamily. Classic translation factor GTPase family. EF-Tu/EF-1A subfamily. Monomer.

Its subcellular location is the cytoplasm. It carries out the reaction GTP + H2O = GDP + phosphate + H(+). Functionally, GTP hydrolase that promotes the GTP-dependent binding of aminoacyl-tRNA to the A-site of ribosomes during protein biosynthesis. The sequence is that of Elongation factor Tu from Chlamydia felis (strain Fe/C-56) (Chlamydophila felis).